The following is a 147-amino-acid chain: Large ribosomal subunit protein bL9 (147 aa).

Belongs to the bacterial ribosomal protein bL9 family.

Functionally, binds to the 23S rRNA. This Geotalea daltonii (strain DSM 22248 / JCM 15807 / FRC-32) (Geobacter daltonii) protein is Large ribosomal subunit protein bL9.